Consider the following 460-residue polypeptide: N-myc proto-oncogene protein (460 aa).

The tract at residues 19–47 (LEFDSLQPCFYPDEDDFYFGGPDSTPPGE) is interaction with AURKA. Residues 61-90 (LSPSRAFSEQSPEPSDWATEMLLPEADLWG) are interaction with AURKA and FBXW7. A 9aaTAD motif is present at residues 76 to 85 (DWATEMLLPE). Disordered regions lie at residues 131–169 (VSEK…GAGR), 221–288 (AAAP…SNSK), and 330–388 (APSP…LERQ). Positions 138-158 (GRGPPAAGPATPGAGAANPAG) are enriched in low complexity. The span at 159–169 (RGHGGTAGAGR) shows a compositional bias: gly residues. Positions 221–233 (AAAPASAAVAAPP) are enriched in low complexity. The segment covering 255 to 274 (TLSDSDDEDDEEEDEEEEID) has biased composition (acidic residues). S257 and S259 each carry phosphoserine; by CK2. Residues 377 to 429 (ERRRNHNILERQRRNDLRSSFLTLRDHVPELVKNEKAAKVVILKKATEYVHSL) form the bHLH domain. A leucine-zipper region spans residues 429–450 (LQAEEHQLLLEKEKLQARQQQL).

Efficient DNA binding requires dimerization with another bHLH protein. Binds DNA as a heterodimer with MAX. Interacts with KDM5A, KDM5B and HUWE1. Interacts with MYCNOS. Interacts with AURKA; interaction is phospho-independent and triggers AURKA activation; AURKA competes with FBXW7 for binding to unphosphorylated MYCN but not for binding to unphosphorylated MYCN. Interacts with FBXW7; FBXW7 competes with AURKA for binding to unphosphorylated MYCN but not for binding to phosphorylated MYCN. Phosphorylated by GSK3-beta which may promote its degradation. Phosphorylated by AURKA.

The protein localises to the nucleus. In terms of biological role, positively regulates the transcription of MYCNOS in neuroblastoma cells. This chain is N-myc proto-oncogene protein (MYCN), found in Marmota monax (Woodchuck).